A 323-amino-acid chain; its full sequence is Delta-aminolevulinic acid dehydratase (323 aa).

Zn(2+)-binding residues include Cys118, Cys120, and Cys128. Lys193 (schiff-base intermediate with substrate) is an active-site residue. The 5-aminolevulinate site is built by Arg203 and Arg215. Residue Glu231 coordinates Mg(2+). Catalysis depends on Lys246, which acts as the Schiff-base intermediate with substrate. Positions 272 and 311 each coordinate 5-aminolevulinate.

It belongs to the ALAD family. In terms of assembly, homooctamer. The cofactor is Zn(2+).

It carries out the reaction 2 5-aminolevulinate = porphobilinogen + 2 H2O + H(+). Its pathway is porphyrin-containing compound metabolism; protoporphyrin-IX biosynthesis; coproporphyrinogen-III from 5-aminolevulinate: step 1/4. Catalyzes an early step in the biosynthesis of tetrapyrroles. Binds two molecules of 5-aminolevulinate per subunit, each at a distinct site, and catalyzes their condensation to form porphobilinogen. This Helicobacter pylori (strain J99 / ATCC 700824) (Campylobacter pylori J99) protein is Delta-aminolevulinic acid dehydratase (hemB).